We begin with the raw amino-acid sequence, 443 residues long: Glutamate--tRNA ligase 1 (443 aa).

The short motif at 10–20 (PSPTGYIHVGN) is the 'HIGH' region element. The short motif at 241-245 (ALSKR) is the 'KMSKS' region element. Residue Lys244 coordinates ATP.

Belongs to the class-I aminoacyl-tRNA synthetase family. Glutamate--tRNA ligase type 1 subfamily. As to quaternary structure, monomer.

It is found in the cytoplasm. It carries out the reaction tRNA(Glu) + L-glutamate + ATP = L-glutamyl-tRNA(Glu) + AMP + diphosphate. In terms of biological role, catalyzes the attachment of glutamate to tRNA(Glu) in a two-step reaction: glutamate is first activated by ATP to form Glu-AMP and then transferred to the acceptor end of tRNA(Glu). This Ruegeria pomeroyi (strain ATCC 700808 / DSM 15171 / DSS-3) (Silicibacter pomeroyi) protein is Glutamate--tRNA ligase 1.